A 227-amino-acid polypeptide reads, in one-letter code: PKHD-type hydroxylase ACIAD0531 (227 aa).

The 101-residue stretch at 78–178 (HIIPPLFNRY…RFASFFWVQS (101 aa)) folds into the Fe2OG dioxygenase domain. 3 residues coordinate Fe cation: histidine 96, aspartate 98, and histidine 159. Arginine 169 lines the 2-oxoglutarate pocket.

Requires Fe(2+) as cofactor. It depends on L-ascorbate as a cofactor.

This chain is PKHD-type hydroxylase ACIAD0531, found in Acinetobacter baylyi (strain ATCC 33305 / BD413 / ADP1).